The sequence spans 406 residues: Probable tRNA sulfurtransferase (406 aa).

The THUMP domain maps to 60–166 (EPVMERLKQV…LNGIYLTSAK (107 aa)). Residues 184–185 (ML), 209–210 (HF), arginine 266, glycine 288, and glutamine 297 each bind ATP.

The protein belongs to the ThiI family.

The protein localises to the cytoplasm. The enzyme catalyses [ThiI sulfur-carrier protein]-S-sulfanyl-L-cysteine + a uridine in tRNA + 2 reduced [2Fe-2S]-[ferredoxin] + ATP + H(+) = [ThiI sulfur-carrier protein]-L-cysteine + a 4-thiouridine in tRNA + 2 oxidized [2Fe-2S]-[ferredoxin] + AMP + diphosphate. The catalysed reaction is [ThiS sulfur-carrier protein]-C-terminal Gly-Gly-AMP + S-sulfanyl-L-cysteinyl-[cysteine desulfurase] + AH2 = [ThiS sulfur-carrier protein]-C-terminal-Gly-aminoethanethioate + L-cysteinyl-[cysteine desulfurase] + A + AMP + 2 H(+). Its pathway is cofactor biosynthesis; thiamine diphosphate biosynthesis. Functionally, catalyzes the ATP-dependent transfer of a sulfur to tRNA to produce 4-thiouridine in position 8 of tRNAs, which functions as a near-UV photosensor. Also catalyzes the transfer of sulfur to the sulfur carrier protein ThiS, forming ThiS-thiocarboxylate. This is a step in the synthesis of thiazole, in the thiamine biosynthesis pathway. The sulfur is donated as persulfide by IscS. This chain is Probable tRNA sulfurtransferase, found in Limosilactobacillus fermentum (strain NBRC 3956 / LMG 18251) (Lactobacillus fermentum).